Reading from the N-terminus, the 306-residue chain is Serine/threonine-protein phosphatase 2A catalytic subunit A (306 aa).

Residues Asp54, His56, Asp82, and Asn114 each coordinate Mn(2+). The active-site Proton donor is the His115. Positions 164 and 238 each coordinate Mn(2+). Leu306 bears the Leucine methyl ester mark.

It belongs to the PPP phosphatase family. PP-2A subfamily. As to quaternary structure, PP2A consists of a trimeric holoenzyme, composed of a 37 kDa catalytic subunit (C subunit) and a 65 kDa constant regulatory subunit (A subunit), that associates with a variety of regulatory subunits (B subunit) such as phr2AB (B55) and psrA (B56 homolog). The trimer may partially dissociates into a core 'AC' dimer equally active compared to the trimer. It depends on Mn(2+) as a cofactor. Post-translationally, reversibly methyl esterified on Leu-306 by leucine carboxyl methyltransferase 1 (LCMT) and protein phosphatase methylesterase 1 (PPME1). Carboxyl methylation influences the affinity of the catalytic subunit for the different regulatory subunits, thereby modulating the PP2A holoenzyme's substrate specificity, enzyme activity and cellular localization.

It is found in the cytoplasm. The protein resides in the cytosol. It localises to the nucleus speckle. It carries out the reaction O-phospho-L-seryl-[protein] + H2O = L-seryl-[protein] + phosphate. It catalyses the reaction O-phospho-L-threonyl-[protein] + H2O = L-threonyl-[protein] + phosphate. Functionally, plays a role in activating the myosin contractile function. Dephosphorylates threonine at 'Thr-1823', 'Thr-1833' and 'Thr-2029' in the C-terminal tail region of myosin II heavy chain (mhcA). Drives the assembly of dephosphorylated myosin II filaments to allow myosin recruitment into the cytoskeleton. The polypeptide is Serine/threonine-protein phosphatase 2A catalytic subunit A (pho2a) (Dictyostelium discoideum (Social amoeba)).